Consider the following 135-residue polypeptide: Small ribosomal subunit protein bS16 (135 aa).

The span at 105-120 (DEKKKPVLKPKTEKAA) shows a compositional bias: basic and acidic residues. A disordered region spans residues 105–135 (DEKKKPVLKPKTEKAAPEAAAPEAEATEEQA).

The protein belongs to the bacterial ribosomal protein bS16 family.

This chain is Small ribosomal subunit protein bS16, found in Clavibacter sepedonicus (Clavibacter michiganensis subsp. sepedonicus).